The sequence spans 333 residues: Protein-methionine-sulfoxide reductase catalytic subunit MsrP (333 aa).

Residues 1–43 (MHKHRKPTEADVTPESLFYQRRRILKALGISAAALSLPFSAQA) constitute a signal peptide (tat-type signal). Mo-molybdopterin-binding positions include asparagine 87, 90–91 (YE), cysteine 145, threonine 180, asparagine 232, arginine 237, and 248–250 (NIK).

It belongs to the MsrP family. As to quaternary structure, heterodimer of a catalytic subunit (MsrP) and a heme-binding subunit (MsrQ). Requires Mo-molybdopterin as cofactor. In terms of processing, predicted to be exported by the Tat system. The position of the signal peptide cleavage has not been experimentally proven.

It is found in the periplasm. It catalyses the reaction L-methionyl-[protein] + a quinone + H2O = L-methionyl-(S)-S-oxide-[protein] + a quinol. It carries out the reaction L-methionyl-[protein] + a quinone + H2O = L-methionyl-(R)-S-oxide-[protein] + a quinol. Its function is as follows. Part of the MsrPQ system that repairs oxidized periplasmic proteins containing methionine sulfoxide residues (Met-O), using respiratory chain electrons. Thus protects these proteins from oxidative-stress damage caused by reactive species of oxygen and chlorine generated by the host defense mechanisms. MsrPQ is essential for the maintenance of envelope integrity under bleach stress, rescuing a wide series of structurally unrelated periplasmic proteins from methionine oxidation. The catalytic subunit MsrP is non-stereospecific, being able to reduce both (R-) and (S-) diastereoisomers of methionine sulfoxide. This Pectobacterium carotovorum subsp. carotovorum (strain PC1) protein is Protein-methionine-sulfoxide reductase catalytic subunit MsrP.